We begin with the raw amino-acid sequence, 501 residues long: Phenylalanine--tRNA ligase alpha subunit (501 aa).

L-phenylalanine is bound by residues T344, 383 to 385, and F424; that span reads QID. E426 contacts Mg(2+). Residue F449 coordinates L-phenylalanine.

Belongs to the class-II aminoacyl-tRNA synthetase family. Phe-tRNA synthetase alpha subunit type 2 subfamily. In terms of assembly, tetramer of two alpha and two beta subunits. Mg(2+) is required as a cofactor.

It localises to the cytoplasm. The enzyme catalyses tRNA(Phe) + L-phenylalanine + ATP = L-phenylalanyl-tRNA(Phe) + AMP + diphosphate + H(+). The polypeptide is Phenylalanine--tRNA ligase alpha subunit (Thermococcus kodakarensis (strain ATCC BAA-918 / JCM 12380 / KOD1) (Pyrococcus kodakaraensis (strain KOD1))).